An 80-amino-acid chain; its full sequence is MGMPVEFNTLIVTKGKEVRIDENIFTLEKDGYRVYPMEIPMDVRKTKFGEKSGTAEVQKLQWEEGRTIITYKLTSLHSVN.

This is an uncharacterized protein from Bacillus subtilis (strain 168).